The sequence spans 1083 residues: Ubiquitin-protein ligase E3C (1083 aa).

2 stretches are compositionally biased toward basic and acidic residues: residues 1–10 (MFSFEGDFKT) and 20–40 (SRKEEKASLLHRTQEERRKRE). Residues 1 to 40 (MFSFEGDFKTRPKVSLGGASRKEEKASLLHRTQEERRKRE) form a disordered region. A cis-determinant of acceptor ubiquitin-binding region spans residues 1 to 60 (MFSFEGDFKTRPKVSLGGASRKEEKASLLHRTQEERRKREEERRRLKNAVIIQSFIRGYR). In terms of domain architecture, IQ spans 45–74 (RLKNAVIIQSFIRGYRDRKQQYFIQRSAFD). A disordered region spans residues 354–386 (ASPTGTGCPDSTSDSEDDNEETDQPNSPEDGRV). Residues 366–376 (SDSEDDNEETD) show a composition bias toward acidic residues. Residues 744-1083 (NEPDLKKRIR…IECAAGFELS (340 aa)) enclose the HECT domain. Residue Lys903 forms a Glycyl lysine isopeptide (Lys-Gly) (interchain with G-Cter in ubiquitin); by autocatalysis linkage. The active-site Glycyl thioester intermediate is the Cys1051.

It belongs to the UBE3C family. Interacts with 26S proteasomes. Interacts (via the HECT domain) with UBE2D1 and, less efficiently, with UBE2L3. In terms of processing, autoubiquitinated; promoting its own degradation.

It catalyses the reaction S-ubiquitinyl-[E2 ubiquitin-conjugating enzyme]-L-cysteine + [acceptor protein]-L-lysine = [E2 ubiquitin-conjugating enzyme]-L-cysteine + N(6)-ubiquitinyl-[acceptor protein]-L-lysine.. The protein operates within protein modification; protein ubiquitination. E3 ubiquitin-protein ligase that specifically catalyzes 'Lys-29'- and 'Lys-48'-linked polyubiquitin chains. Accepts ubiquitin from the E2 ubiquitin-conjugating enzyme UBE2D1 in the form of a thioester and then directly transfers the ubiquitin to targeted substrates. Associates with the proteasome and promotes elongation of ubiquitin chains on substrates bound to the 26S proteasome. Also catalyzes 'Lys-29'- and 'Lys-48'-linked ubiquitination of 26S proteasome subunit ADRM1/RPN13 in response to proteotoxic stress, impairing the ability of the proteasome to bind and degrade ubiquitin-conjugated proteins. Acts as a negative regulator of autophagy by mediating 'Lys-29'- and 'Lys-48'-linked ubiquitination of PIK3C3/VPS34, promoting its degradation. Can assemble unanchored poly-ubiquitin chains in either 'Lys-29'- or 'Lys-48'-linked polyubiquitin chains; with some preference for 'Lys-48' linkages. Acts as a negative regulator of type I interferon by mediating 'Lys-48'-linked ubiquitination of IRF3 and IRF7, leading to their degradation by the proteasome. Catalyzes ubiquitination and degradation of CAND2. This Mus musculus (Mouse) protein is Ubiquitin-protein ligase E3C.